A 100-amino-acid chain; its full sequence is Small ribosomal subunit protein bS20 (100 aa).

A compositionally biased stretch (basic and acidic residues) spans 1 to 18 (MPNKKSAEKRVRQSEQRR). Residues 1–26 (MPNKKSAEKRVRQSEQRRQKNRGYQK) form a disordered region.

This sequence belongs to the bacterial ribosomal protein bS20 family.

Its function is as follows. Binds directly to 16S ribosomal RNA. The chain is Small ribosomal subunit protein bS20 from Petrotoga mobilis (strain DSM 10674 / SJ95).